Here is an 883-residue protein sequence, read N- to C-terminus: Integrator complex subunit 6-A (883 aa).

The VWFA domain occupies Ile-3–Val-227. The short motif at Met-626–Glu-633 is the Inhibitory loop element.

This sequence belongs to the Integrator subunit 6 family. As to quaternary structure, component of the Integrator complex, composed of core subunits INTS1, INTS2, INTS3, INTS4, INTS5, INTS6, INTS7, INTS8, INTS9/RC74, INTS10, INTS11/CPSF3L, INTS12, INTS13, INTS14 and INTS15. The core complex associates with protein phosphatase 2A subunits PPP2CA and PPP2R1A, to form the Integrator-PP2A (INTAC) complex.

The protein localises to the nucleus. It is found in the chromosome. Its function is as follows. Component of the integrator complex, a multiprotein complex that terminates RNA polymerase II (Pol II) transcription in the promoter-proximal region of genes. The integrator complex provides a quality checkpoint during transcription elongation by driving premature transcription termination of transcripts that are unfavorably configured for transcriptional elongation: the complex terminates transcription by (1) catalyzing dephosphorylation of the C-terminal domain (CTD) of Pol II subunit POLR2A/RPB1 and SUPT5H/SPT5, (2) degrading the exiting nascent RNA transcript via endonuclease activity and (3) promoting the release of Pol II from bound DNA. The integrator complex is also involved in terminating the synthesis of non-coding Pol II transcripts, such as enhancer RNAs (eRNAs), small nuclear RNAs (snRNAs), telomerase RNAs and long non-coding RNAs (lncRNAs). Within the integrator complex, INTS6 acts as a molecular adapter that promotes assembly of protein phosphatase 2A (PP2A) subunits to the integrator core complex, promoting recruitment of PP2A to transcription pause-release checkpoint. This Xenopus laevis (African clawed frog) protein is Integrator complex subunit 6-A (ints6-a).